The chain runs to 30 residues: Cytochrome b6-f complex subunit 8 (30 aa).

The helical transmembrane segment at 4–24 (IISLGWGSLLAIFSFSIALVV) threads the bilayer.

This sequence belongs to the PetN family. In terms of assembly, the 4 large subunits of the cytochrome b6-f complex are cytochrome b6, subunit IV (17 kDa polypeptide, PetD), cytochrome f and the Rieske protein, while the 4 small subunits are PetG, PetL, PetM and PetN. The complex functions as a dimer.

It localises to the plastid. It is found in the chloroplast thylakoid membrane. Its function is as follows. Component of the cytochrome b6-f complex, which mediates electron transfer between photosystem II (PSII) and photosystem I (PSI), cyclic electron flow around PSI, and state transitions. The polypeptide is Cytochrome b6-f complex subunit 8 (Gracilaria tenuistipitata var. liui (Red alga)).